Consider the following 486-residue polypeptide: Zinc transporter 6 (486 aa).

The Cytoplasmic segment spans residues 1–60 (MVALDVLGITDSDAPVYRQKQEADTLVLGTIHPFRKAHRSVLGKLAQEFRLVTSDRRSWK). A helical transmembrane segment spans residues 61–81 (ILLFGVLNVVCTGCLLMWCSS). Topologically, residues 82-91 (TNSMALTAYT) are extracellular. The helical transmembrane segment at 92-112 (YLTIFDLFSLITCLLSLWVTM) threads the bilayer. At 113–125 (KKPSQIYSFGFQR) the chain is on the cytoplasmic side. The chain crosses the membrane as a helical span at residues 126–146 (FEVLAVFSSTVLVQLGSLFIL). The Extracellular segment spans residues 147–161 (KESVERFVEQPEVHT). Residues 162-182 (GRLLVGTFVALFFNLLTLLSV) form a helical membrane-spanning segment. Residues 183–227 (KNKPFVFVSEAASTSWLQEHVADLSRSLCGLIPALSSFLLPRMNP) are Cytoplasmic-facing. The helical transmembrane segment at 228-248 (FVLINLAGAFALGITYMLIEI) threads the bilayer. At 249 to 255 (NNYNAMD) the chain is on the extracellular side. The helical transmembrane segment at 256–276 (TASAVAIALMTFGTMYPMSVY) threads the bilayer. The Cytoplasmic segment spans residues 277-486 (SGKVLLQTTP…SGTYTGPPRP (210 aa)). A compositionally biased stretch (low complexity) spans 394–411 (PSRAQGSEPTPATSTPAK). A disordered region spans residues 394–425 (PSRAQGSEPTPATSTPAKPSSPPPEFSFHTPG).

Belongs to the cation diffusion facilitator (CDF) transporter (TC 2.A.4) family. SLC30A subfamily. Heterodimer with SLC30A5; form a functional zinc ion transmembrane transporter.

The protein localises to the golgi apparatus. The protein resides in the trans-Golgi network membrane. In terms of biological role, has probably no intrinsic transporter activity but together with SLC30A5 forms a functional zinc ion:proton antiporter heterodimer, mediating zinc entry into the lumen of organelles along the secretory pathway. As part of that zinc ion:proton antiporter, contributes to zinc ion homeostasis within the early secretory pathway and regulates the activation and folding of enzymes like alkaline phosphatases and enzymes involved in phosphatidylinositol glycan anchor biosynthesis. This is Zinc transporter 6 (slc30a6) from Danio rerio (Zebrafish).